Here is a 3065-residue protein sequence, read N- to C-terminus: MAX gene-associated protein (3065 aa).

Residues Lys4 and Lys178 each participate in a glycyl lysine isopeptide (Lys-Gly) (interchain with G-Cter in SUMO2) cross-link. The segment at residues 84–260 (MWNEFYHRST…YNPFAKGFRD (177 aa)) is a DNA-binding region (T-box). Residues 259 to 277 (RDDGLNNKPQRDGKQKNSS) show a composition bias toward basic and acidic residues. Residues 259–322 (RDDGLNNKPQ…GHETSGKGLE (64 aa)) are disordered. Residues 278-289 (DQEGNNISSSSG) show a composition bias toward polar residues. A compositionally biased stretch (basic and acidic residues) spans 309–322 (PLSRGHETSGKGLE). Residues Lys323, Lys329, Lys349, Lys432, Lys460, Lys465, and Lys482 each participate in a glycyl lysine isopeptide (Lys-Gly) (interchain with G-Cter in SUMO2) cross-link. Ser534 carries the post-translational modification Phosphoserine. Lys570 is covalently cross-linked (Glycyl lysine isopeptide (Lys-Gly) (interchain with G-Cter in SUMO2)). Residues 604 to 653 (QNASPNVPGKRGRPRKLKLCKAGRPPKNTGKSLISTKNTPVSPGSTFPDV) form a disordered region. Ser607 bears the Phosphoserine mark. Lys613 is covalently cross-linked (Glycyl lysine isopeptide (Lys-Gly) (interchain with G-Cter in SUMO2)). The segment covering 613-624 (KRGRPRKLKLCK) has biased composition (basic residues). The span at 632-648 (TGKSLISTKNTPVSPGS) shows a compositional bias: polar residues. A Phosphoserine modification is found at Ser645. Residues Lys654, Lys785, Lys791, Lys817, and Lys826 each participate in a glycyl lysine isopeptide (Lys-Gly) (interchain with G-Cter in SUMO2) cross-link. Phosphoserine is present on Ser851. The disordered stretch occupies residues 881–911 (STSYSLKPHSVPPVSRKAKSQNRQATFSGRT). Residues 901-911 (QNRQATFSGRT) are compositionally biased toward polar residues. A Phosphoserine modification is found at Ser924. Residue Lys928 forms a Glycyl lysine isopeptide (Lys-Gly) (interchain with G-Cter in SUMO2) linkage. Positions 971 to 990 (RQAQQQQQQQQGSRPPGLSK) are disordered. The segment covering 972–981 (QAQQQQQQQQ) has biased composition (low complexity). Glycyl lysine isopeptide (Lys-Gly) (interchain with G-Cter in SUMO2) cross-links involve residues Lys990, Lys1091, Lys1140, Lys1162, Lys1199, and Lys1207. Positions 1111-1147 (YDTLGEEAREEEEGIREEEEQLKEKKKRKKLEYTICE) form a coiled coil. Ser1208 is subject to Phosphoserine. 2 disordered regions span residues 1246-1332 (RKKE…PGGP) and 1380-1429 (RKSR…MEDI). Low complexity-rich tracts occupy residues 1253–1269 (QPSS…QQTS) and 1310–1322 (KSSC…SSTS). Ser1430 and Ser1457 each carry phosphoserine. Glycyl lysine isopeptide (Lys-Gly) (interchain with G-Cter in SUMO2) cross-links involve residues Lys1461 and Lys1502. Disordered regions lie at residues 1488–1517 (SRKP…PGKN), 1905–1927 (SPPE…YSSG), and 1967–2029 (QMKR…EDRG). Polar residues-rich tracts occupy residues 1495–1514 (LPST…TNRP) and 1911–1927 (SFAS…YSSG). Residues 1968 to 1994 (MKRESQNPDQKDETNSIKREQETKKVL) show a composition bias toward basic and acidic residues. Glycyl lysine isopeptide (Lys-Gly) (interchain with G-Cter in SUMO2) cross-links involve residues Lys1985 and Lys1992. Residues 2008-2023 (IKQNSGAATSEETLND) show a composition bias toward polar residues. Glycyl lysine isopeptide (Lys-Gly) (interchain with G-Cter in SUMO2) cross-links involve residues Lys2103, Lys2113, Lys2135, Lys2139, Lys2146, Lys2159, Lys2194, Lys2206, and Lys2238. A disordered region spans residues 2258–2316 (RRAAKSSRGNGHFQGHLLLPGEQIQPKQEKKGGRSSADFTVLDLEEDDEDDNEKTDDSI). Residue Arg2265 is modified to Omega-N-methylarginine. A Glycyl lysine isopeptide (Lys-Gly) (interchain with G-Cter in SUMO2) cross-link involves residue Lys2284. Acidic residues predominate over residues 2300–2316 (DLEEDDEDDNEKTDDSI). Residues Lys2378, Lys2413, Lys2457, and Lys2532 each participate in a glycyl lysine isopeptide (Lys-Gly) (interchain with G-Cter in SUMO2) cross-link. The region spanning 2423-2474 (YYRRTHTANERRRRGEMRDLFEKLKITLGLLHSSKVSKSLILTRAFSEIQGL) is the bHLH domain. The residue at position 2541 (Ser2541) is a Phosphoserine. A Glycyl lysine isopeptide (Lys-Gly) (interchain with G-Cter in SUMO2) cross-link involves residue Lys2546. The disordered stretch occupies residues 2576–2595 (KKDQATENTSPLNTPHTSAN). Over residues 2581 to 2595 (TENTSPLNTPHTSAN) the composition is skewed to polar residues. Glycyl lysine isopeptide (Lys-Gly) (interchain with G-Cter in SUMO2) cross-links involve residues Lys2629, Lys2679, Lys2698, and Lys2784. A disordered region spans residues 2668-2709 (GSKYPHEVPDSKPSDHLKDTVRNEDNSLEDKGRISSRGNRDG). Basic and acidic residues predominate over residues 2671–2709 (YPHEVPDSKPSDHLKDTVRNEDNSLEDKGRISSRGNRDG). The stretch at 2817–2841 (DDTDETLTSLLNEIAFLNQQLNDDS) forms a coiled coil. Phosphoserine is present on residues Ser2910 and Ser2921. A disordered region spans residues 2944–2968 (AIDGGKNTSGLPAEPESVSSPPTLH). Ser2978 carries the phosphoserine modification. A Glycyl lysine isopeptide (Lys-Gly) (interchain with G-Cter in SUMO2) cross-link involves residue Lys3041.

In terms of assembly, interacts with MAX. Requires dimerization with MAX for E-box binding. Component of some MLL1/MLL complex, at least composed of the core components KMT2A/MLL1, ASH2L, HCFC1/HCF1, WDR5 and RBBP5, as well as the facultative components BACC1, CHD8, E2F6, HSP70, INO80C, KANSL1, LAS1L, MAX, MCRS1, MGA, MYST1/MOF, PELP1, PHF20, PRP31, RING2, RUVB1/TIP49A, RUVB2/TIP49B, SENP3, TAF1, TAF4, TAF6, TAF7, TAF9 and TEX10. Interacts with ZMYND11. As to expression, highly expressed in germ cells and granulosa cells.

Its subcellular location is the nucleus. Functionally, functions as a dual-specificity transcription factor, regulating the expression of both MAX-network and T-box family target genes. Functions as a repressor or an activator. Binds to 5'-AATTTCACACCTAGGTGTGAAATT-3' core sequence and seems to regulate MYC-MAX target genes. Suppresses transcriptional activation by MYC and inhibits MYC-dependent cell transformation. Function activated by heterodimerization with MAX. This heterodimerization serves the dual function of both generating an E-box-binding heterodimer and simultaneously blocking interaction of a corepressor. This Homo sapiens (Human) protein is MAX gene-associated protein.